A 273-amino-acid chain; its full sequence is Pantothenate synthetase (273 aa).

Residue 27 to 34 (MGALHAGH) participates in ATP binding. Histidine 34 functions as the Proton donor in the catalytic mechanism. (R)-pantoate is bound at residue glutamine 58. Glutamine 58 is a binding site for beta-alanine. 144 to 147 (GKKD) is an ATP binding site. Glutamine 150 is a binding site for (R)-pantoate. ATP-binding positions include valine 173 and 181 to 184 (LSSR).

Belongs to the pantothenate synthetase family. Homodimer.

The protein localises to the cytoplasm. It carries out the reaction (R)-pantoate + beta-alanine + ATP = (R)-pantothenate + AMP + diphosphate + H(+). Its pathway is cofactor biosynthesis; (R)-pantothenate biosynthesis; (R)-pantothenate from (R)-pantoate and beta-alanine: step 1/1. Catalyzes the condensation of pantoate with beta-alanine in an ATP-dependent reaction via a pantoyl-adenylate intermediate. This chain is Pantothenate synthetase, found in Campylobacter hominis (strain ATCC BAA-381 / DSM 21671 / CCUG 45161 / LMG 19568 / NCTC 13146 / CH001A).